The primary structure comprises 188 residues: Protein GrpE (188 aa).

Basic and acidic residues predominate over residues 1–16; it reads MEERNEQVVEEVKEAQ. The disordered stretch occupies residues 1–31; the sequence is MEERNEQVVEEVKEAQVEEAVTPENSEETVE.

This sequence belongs to the GrpE family. As to quaternary structure, homodimer.

The protein resides in the cytoplasm. Participates actively in the response to hyperosmotic and heat shock by preventing the aggregation of stress-denatured proteins, in association with DnaK and GrpE. It is the nucleotide exchange factor for DnaK and may function as a thermosensor. Unfolded proteins bind initially to DnaJ; upon interaction with the DnaJ-bound protein, DnaK hydrolyzes its bound ATP, resulting in the formation of a stable complex. GrpE releases ADP from DnaK; ATP binding to DnaK triggers the release of the substrate protein, thus completing the reaction cycle. Several rounds of ATP-dependent interactions between DnaJ, DnaK and GrpE are required for fully efficient folding. This is Protein GrpE from Bacillus anthracis.